The sequence spans 560 residues: MAASNFMGSSARLRVGLLPSVTPRLSRRALATRASADSGGSGPVRVRFAPSPTGNLHVGGARTALFNYLFARSRGGKFVLRVEDTDLERSTKKSEEAVLTDLSWLGLDWDEGPDIGGDFGPYRQSERNALYKEHAQKLMESGAVYRCFCSNEELEKMKETANRMKIPPVYMGKWATASDAEVQQELEKGTPYTYRFRVPKEGSLKINDLIRGEVSWNLNTLGDFVIMRSNGQPVYNFCVTVDDATMRISHVIRAEEHLPNTLRQALIYKALGFAMPLFAHVSLILAPDKSKLSKRHGATSVGQYKEMGYLPQAMVNYLALLGWGDGTENEFFTIDDLVEKFTIDRVNKSGAVFDATKLKWMNGQHLRSLPSDLLIKDFEDQWRSTGILLESESGFAKEAAELLKEGIDLITDADAALCKLLSYPLHETLSSDEAKSVVEDKLSEVASGLISAYDSGELDQALAEGHDGWKKWVKSFGKTHKRKGKSLFMPLRVLLTGKLHGPAMDSTVILVHKAGTSGAVAPQSGFVSLDERFKILKEVNWESLQKQQESPVESAVPAAS.

47–49 (RFA) is a binding site for L-glutamate. The 'HIGH' region motif lies at 50–60 (PSPTGNLHVGG). His-57 is a binding site for ATP. L-glutamate contacts are provided by residues Glu-83, 235–239 (YNFCV), and Arg-253. ATP-binding positions include Glu-256 and 291–295 (KLSKR). A 'KMSKS' region motif is present at residues 291 to 295 (KLSKR).

The protein belongs to the class-I aminoacyl-tRNA synthetase family. Glutamate--tRNA ligase type 1 subfamily.

The protein localises to the plastid. It is found in the chloroplast. Its subcellular location is the mitochondrion. The enzyme catalyses tRNA(Glu) + L-glutamate + ATP = L-glutamyl-tRNA(Glu) + AMP + diphosphate. Catalyzes the attachment of glutamate to tRNA(Glu) in a two-step reaction: glutamate is first activated by ATP to form Glu-AMP and then transferred to the acceptor end of tRNA(Glu). This Hordeum vulgare (Barley) protein is Glutamate--tRNA ligase, chloroplastic/mitochondrial.